A 234-amino-acid chain; its full sequence is uncharacterized protein (234 aa).

A run of 4 helical transmembrane segments spans residues 28-48, 67-87, 123-143, and 154-174; these read IVII…SIIS, FQIF…FDPI, GGVD…SGTI, and LYCI…GLLY.

The protein belongs to the complex I subunit 2 family.

It localises to the mitochondrion membrane. This is an uncharacterized protein from Neurospora crassa (strain ATCC 24698 / 74-OR23-1A / CBS 708.71 / DSM 1257 / FGSC 987).